The primary structure comprises 156 residues: Small ribosomal subunit protein uS7 (156 aa).

The protein belongs to the universal ribosomal protein uS7 family. In terms of assembly, part of the 30S ribosomal subunit. Contacts proteins S9 and S11.

One of the primary rRNA binding proteins, it binds directly to 16S rRNA where it nucleates assembly of the head domain of the 30S subunit. Is located at the subunit interface close to the decoding center, probably blocks exit of the E-site tRNA. The sequence is that of Small ribosomal subunit protein uS7 from Clostridium tetani (strain Massachusetts / E88).